The chain runs to 109 residues: MNRHSTAASDRGLQAERTTLAWTRTAFALLVNGVLLTLKDTQGADGPAGLIPAGLAGAAASCCYVIALQRQRALSHRPLPARITPRGQVHILATAVLVLMVVTAFAQLL.

2 consecutive transmembrane segments (helical) span residues 18–38 and 48–68; these read TTLAWTRTAFALLVNGVLLTL and AGLIPAGLAGAAASCCYVIAL.

It is found in the cell membrane. This is an uncharacterized protein from Mycobacterium tuberculosis (strain CDC 1551 / Oshkosh).